We begin with the raw amino-acid sequence, 415 residues long: tRNA(Ile)-lysidine synthase (415 aa).

An ATP-binding site is contributed by 36-41 (SGGRDS).

This sequence belongs to the tRNA(Ile)-lysidine synthase family.

The protein localises to the cytoplasm. The enzyme catalyses cytidine(34) in tRNA(Ile2) + L-lysine + ATP = lysidine(34) in tRNA(Ile2) + AMP + diphosphate + H(+). Functionally, ligates lysine onto the cytidine present at position 34 of the AUA codon-specific tRNA(Ile) that contains the anticodon CAU, in an ATP-dependent manner. Cytidine is converted to lysidine, thus changing the amino acid specificity of the tRNA from methionine to isoleucine. In Tropheryma whipplei (strain Twist) (Whipple's bacillus), this protein is tRNA(Ile)-lysidine synthase.